Reading from the N-terminus, the 417-residue chain is D-glycerate 2-kinase (417 aa).

The protein belongs to the glycerate kinase type-1 family. Homodimer. Mg(2+) is required as a cofactor.

It catalyses the reaction (R)-glycerate + ATP = (2R)-2-phosphoglycerate + ADP + H(+). Functionally, involved in the degradation of serine via 3-hydroxypyruvate. Catalyzes the ATP-dependent phosphorylation of D-glycerate to 2-phosphoglycerate. The sequence is that of D-glycerate 2-kinase from Thermotoga maritima (strain ATCC 43589 / DSM 3109 / JCM 10099 / NBRC 100826 / MSB8).